The following is a 480-amino-acid chain: Chromosomal replication initiator protein DnaA (480 aa).

Residues 1–71 form a domain I, interacts with DnaA modulators region; the sequence is MRHDALFERV…TTLVQQEDSE (71 aa). The domain II stretch occupies residues 71–137; the sequence is EILKVEILVR…RPVQAPLFGS (67 aa). The interval 138-360 is domain III, AAA+ region; that stretch reads PLDQRYGFDS…GAFNQLLFRR (223 aa). ATP-binding residues include Gly-184, Gly-186, Lys-187, and Thr-188. The segment at 361-480 is domain IV, binds dsDNA; the sequence is SFEPQLSIER…IELLKRLINE (120 aa).

Belongs to the DnaA family. Oligomerizes as a right-handed, spiral filament on DNA at oriC.

Its subcellular location is the cytoplasm. Plays an essential role in the initiation and regulation of chromosomal replication. ATP-DnaA binds to the origin of replication (oriC) to initiate formation of the DNA replication initiation complex once per cell cycle. Binds the DnaA box (a 9 base pair repeat at the origin) and separates the double-stranded (ds)DNA. Forms a right-handed helical filament on oriC DNA; dsDNA binds to the exterior of the filament while single-stranded (ss)DNA is stabiized in the filament's interior. The ATP-DnaA-oriC complex binds and stabilizes one strand of the AT-rich DNA unwinding element (DUE), permitting loading of DNA polymerase. After initiation quickly degrades to an ADP-DnaA complex that is not apt for DNA replication. Binds acidic phospholipids. This chain is Chromosomal replication initiator protein DnaA, found in Rhizobium meliloti (strain 1021) (Ensifer meliloti).